A 260-amino-acid chain; its full sequence is Ribonuclease PH (260 aa).

Phosphate-binding positions include Arg-87 and 125–127 (GTR). Residues 232–260 (LAAPPAAGPPAPERAGAGSGSGGKGTGSR) are disordered. The segment covering 248–260 (AGSGSGGKGTGSR) has biased composition (gly residues).

This sequence belongs to the RNase PH family. In terms of assembly, homohexameric ring arranged as a trimer of dimers.

The enzyme catalyses tRNA(n+1) + phosphate = tRNA(n) + a ribonucleoside 5'-diphosphate. Functionally, phosphorolytic 3'-5' exoribonuclease that plays an important role in tRNA 3'-end maturation. Removes nucleotide residues following the 3'-CCA terminus of tRNAs; can also add nucleotides to the ends of RNA molecules by using nucleoside diphosphates as substrates, but this may not be physiologically important. Probably plays a role in initiation of 16S rRNA degradation (leading to ribosome degradation) during starvation. This Parafrankia sp. (strain EAN1pec) protein is Ribonuclease PH.